The sequence spans 444 residues: Methylenetetrahydrofolate--tRNA-(uracil-5-)-methyltransferase TrmFO (444 aa).

Residue Gly10–Gly15 coordinates FAD.

The protein belongs to the MnmG family. TrmFO subfamily. FAD serves as cofactor.

It is found in the cytoplasm. It carries out the reaction uridine(54) in tRNA + (6R)-5,10-methylene-5,6,7,8-tetrahydrofolate + NADH + H(+) = 5-methyluridine(54) in tRNA + (6S)-5,6,7,8-tetrahydrofolate + NAD(+). It catalyses the reaction uridine(54) in tRNA + (6R)-5,10-methylene-5,6,7,8-tetrahydrofolate + NADPH + H(+) = 5-methyluridine(54) in tRNA + (6S)-5,6,7,8-tetrahydrofolate + NADP(+). Functionally, catalyzes the folate-dependent formation of 5-methyl-uridine at position 54 (M-5-U54) in all tRNAs. The protein is Methylenetetrahydrofolate--tRNA-(uracil-5-)-methyltransferase TrmFO of Streptococcus pneumoniae (strain Taiwan19F-14).